The chain runs to 388 residues: Beta-lactamase (388 aa).

The signal sequence occupies residues 1 to 24 (MMKKSIINTLIFTSIATFPLYTLA). The active-site Acyl-ester intermediate is the S89. Y175 serves as the catalytic Proton acceptor. Substrate is bound at residue 342-344 (KTG).

This sequence belongs to the class-C beta-lactamase family.

The protein localises to the periplasm. The enzyme catalyses a beta-lactam + H2O = a substituted beta-amino acid. Its function is as follows. This protein is a serine beta-lactamase with a substrate specificity for cephalosporins. In Yersinia enterocolitica, this protein is Beta-lactamase (ampC).